The following is a 378-amino-acid chain: MLNDSVIDIAKQLINRRSVTPEDAGCQEAMCEFLGALGFDNETMVFEDTTNLWSRRGKEGPVFCFAGHTDVVPSGPEDAWKTPPFTATEVNGYLHGRGAADMKGSLAAMLVATREFVNQYPQHKGSIAYLITSDEEGPFINGTTRVIDTLEARNEKIDWCIVGEPSSTDEVGDIVKNGRRGSLTGDLVVKGVQGHVAYPHLAKNPVHSAMAALDELAKSHWDNGNDFFPPTSFQISNIHAGTGAGNVIPGELHVCFNFRFSTEVTDQILIERVTTILDAHELDYDIKWTFNGQPFLTDTGALLDATQGAIEAVKGTPTVLSTAGGTSDGRFIAPTGAQVIELGPVNATIHKIDECVKMADLEQLADMYFGILERLLAN.

Residue His-68 participates in Zn(2+) binding. The active site involves Asp-70. Asp-101 provides a ligand contact to Zn(2+). Glu-135 serves as the catalytic Proton acceptor. The Zn(2+) site is built by Glu-136, Glu-164, and His-350.

This sequence belongs to the peptidase M20A family. DapE subfamily. As to quaternary structure, homodimer. Zn(2+) serves as cofactor. The cofactor is Co(2+).

The catalysed reaction is N-succinyl-(2S,6S)-2,6-diaminopimelate + H2O = (2S,6S)-2,6-diaminopimelate + succinate. The protein operates within amino-acid biosynthesis; L-lysine biosynthesis via DAP pathway; LL-2,6-diaminopimelate from (S)-tetrahydrodipicolinate (succinylase route): step 3/3. Its function is as follows. Catalyzes the hydrolysis of N-succinyl-L,L-diaminopimelic acid (SDAP), forming succinate and LL-2,6-diaminopimelate (DAP), an intermediate involved in the bacterial biosynthesis of lysine and meso-diaminopimelic acid, an essential component of bacterial cell walls. The chain is Succinyl-diaminopimelate desuccinylase 2 from Alteromonas mediterranea (strain DSM 17117 / CIP 110805 / LMG 28347 / Deep ecotype).